The following is a 349-amino-acid chain: Thioredoxin-related transmembrane protein 4 (349 aa).

The signal sequence occupies residues methionine 1–alanine 23. A Thioredoxin domain is found at alanine 30–glutamate 137. Catalysis depends on nucleophile residues cysteine 64 and cysteine 67. Residues cysteine 64 and cysteine 67 are joined by a disulfide bond. The helical transmembrane segment at valine 190 to isoleucine 210 threads the bilayer. Over residues arginine 225–glutamine 240 the composition is skewed to basic and acidic residues. The disordered stretch occupies residues arginine 225–leucine 349. Composition is skewed to acidic residues over residues glutamine 242 to asparagine 284 and valine 312 to isoleucine 321. A phosphoserine mark is found at serine 251 and serine 259. Residues aspartate 335 to leucine 349 show a composition bias toward basic and acidic residues.

The protein resides in the nucleus inner membrane. It is found in the endoplasmic reticulum membrane. The polypeptide is Thioredoxin-related transmembrane protein 4 (TMX4) (Homo sapiens (Human)).